The sequence spans 216 residues: UPF0134 protein MPN_344 (216 aa).

Residues 47-62 are compositionally biased toward basic and acidic residues; it reads FTIIEDQQDRPDKPEE. 2 disordered regions span residues 47–104 and 194–216; these read FTII…PKPD and GKMD…LESK. A compositionally biased stretch (pro residues) spans 68-78; it reads IPKPPKPPKGP. Residues 83–93 are compositionally biased toward low complexity; the sequence is EPGQPGGPDDP.

It belongs to the UPF0134 family.

The polypeptide is UPF0134 protein MPN_344 (Mycoplasma pneumoniae (strain ATCC 29342 / M129 / Subtype 1) (Mycoplasmoides pneumoniae)).